Consider the following 555-residue polypeptide: Glucose-6-phosphate isomerase (555 aa).

D-glucose 6-phosphate contacts are provided by residues 169 to 170, 219 to 224, Q364, E368, H399, and K521; these read GS and SKTFTT. The active-site Proton donor is E368. Active-site residues include H399 and K521.

The protein belongs to the GPI family. Homodimer.

It localises to the cytoplasm. It is found in the cytosol. It catalyses the reaction alpha-D-glucose 6-phosphate = beta-D-fructose 6-phosphate. The protein operates within carbohydrate degradation; glycolysis; D-glyceraldehyde 3-phosphate and glycerone phosphate from D-glucose: step 2/4. Functionally, in the cytoplasm, catalyzes the conversion of glucose-6-phosphate to fructose-6-phosphate, the second step in glycolysis, and the reverse reaction during gluconeogenesis. This chain is Glucose-6-phosphate isomerase (PGI1), found in Eremothecium gossypii (strain ATCC 10895 / CBS 109.51 / FGSC 9923 / NRRL Y-1056) (Yeast).